We begin with the raw amino-acid sequence, 356 residues long: Glutamine synthetase (356 aa).

The GS beta-grasp domain maps to 26–105 (IMAEYVWVDA…VLAECWNAGG (80 aa)). The 245-residue stretch at 112–356 (FRHDCVKVMD…TKALLQFSLA (245 aa)) folds into the GS catalytic domain.

It belongs to the glutamine synthetase family. In terms of assembly, homooctamer.

It is found in the cytoplasm. The catalysed reaction is L-glutamate + NH4(+) + ATP = L-glutamine + ADP + phosphate + H(+). This chain is Glutamine synthetase (GLN1), found in Fusarium solani subsp. phaseoli (Nectria haematococca).